Here is a 746-residue protein sequence, read N- to C-terminus: Probably inactive copalyl diphosphate synthase 3 (746 aa).

The short motif at 331–334 (DVND) is the DXDD motif; degenerated element.

This sequence belongs to the terpene synthase family. Tpsc subfamily. As to expression, mostly expressed in stems, and, at low levels, in roots and leaves, but barely in flowers.

This chain is Probably inactive copalyl diphosphate synthase 3, found in Isodon rubescens (Rabdosia rubescens).